Reading from the N-terminus, the 1182-residue chain is Intraflagellar transport protein 122 homolog (1182 aa).

WD repeat units lie at residues 10–50 (KAEQ…QPLK), 51–91 (GHKD…LKYT), 93–129 (NDSI…VSKH), 131–169 (SSSK…KVKI), 174–217 (GSLS…IGKD), 219–258 (PLNF…LGTV), 260–300 (EQNS…HGLY), and 453–492 (KQAT…LLFQ).

In terms of assembly, component of the IFT complex A (IFT-A) complex. IFT-A complex is divided into a core subcomplex composed of IFT122:IFT140:WDR19 which is associated with TULP3 and a peripheral subcomplex composed of IFT43:WDR35:TTC21B. Interacts with IFT43:WDR35; the interaction connects the 2 IFT-A subcomplexes. Interacts with IFTAP; the interaction associates IFTAP with IFT-A complex.

Its subcellular location is the cell projection. The protein resides in the cilium. The protein localises to the cytoplasm. It is found in the cytoskeleton. It localises to the cilium basal body. In terms of biological role, as a component of the IFT complex A (IFT-A), a complex required for retrograde ciliary transport and entry into cilia of G protein-coupled receptors (GPCRs), it is required in ciliogenesis and ciliary protein trafficking. Involved in cilia formation during neuronal patterning. Acts as a negative regulator of Shh signaling. Required to recruit TULP3 to primary cilia. This chain is Intraflagellar transport protein 122 homolog, found in Mus musculus (Mouse).